Reading from the N-terminus, the 271-residue chain is S-adenosylmethionine decarboxylase proenzyme (271 aa).

S121 functions as the Schiff-base intermediate with substrate; via pyruvic acid in the catalytic mechanism. A Pyruvic acid (Ser); by autocatalysis modification is found at S121. Residue H126 is the Proton acceptor; for processing activity of the active site. The Proton donor; for catalytic activity role is filled by C149.

The protein belongs to the prokaryotic AdoMetDC family. Type 2 subfamily. In terms of assembly, heterooctamer of four alpha and four beta chains arranged as a tetramer of alpha/beta heterodimers. Pyruvate serves as cofactor. Is synthesized initially as an inactive proenzyme. Formation of the active enzyme involves a self-maturation process in which the active site pyruvoyl group is generated from an internal serine residue via an autocatalytic post-translational modification. Two non-identical subunits are generated from the proenzyme in this reaction, and the pyruvate is formed at the N-terminus of the alpha chain, which is derived from the carboxyl end of the proenzyme. The post-translation cleavage follows an unusual pathway, termed non-hydrolytic serinolysis, in which the side chain hydroxyl group of the serine supplies its oxygen atom to form the C-terminus of the beta chain, while the remainder of the serine residue undergoes an oxidative deamination to produce ammonia and the pyruvoyl group blocking the N-terminus of the alpha chain.

The enzyme catalyses S-adenosyl-L-methionine + H(+) = S-adenosyl 3-(methylsulfanyl)propylamine + CO2. It functions in the pathway amine and polyamine biosynthesis; S-adenosylmethioninamine biosynthesis; S-adenosylmethioninamine from S-adenosyl-L-methionine: step 1/1. Its function is as follows. Catalyzes the decarboxylation of S-adenosylmethionine to S-adenosylmethioninamine (dcAdoMet), the propylamine donor required for the synthesis of the polyamines spermine and spermidine from the diamine putrescine. This is S-adenosylmethionine decarboxylase proenzyme from Clostridium beijerinckii (strain ATCC 51743 / NCIMB 8052) (Clostridium acetobutylicum).